A 340-amino-acid chain; its full sequence is Phenylalanine--tRNA ligase alpha subunit (340 aa).

E258 is a binding site for Mg(2+).

It belongs to the class-II aminoacyl-tRNA synthetase family. Phe-tRNA synthetase alpha subunit type 1 subfamily. In terms of assembly, tetramer of two alpha and two beta subunits. The cofactor is Mg(2+).

It is found in the cytoplasm. It catalyses the reaction tRNA(Phe) + L-phenylalanine + ATP = L-phenylalanyl-tRNA(Phe) + AMP + diphosphate + H(+). In Corynebacterium glutamicum (strain ATCC 13032 / DSM 20300 / JCM 1318 / BCRC 11384 / CCUG 27702 / LMG 3730 / NBRC 12168 / NCIMB 10025 / NRRL B-2784 / 534), this protein is Phenylalanine--tRNA ligase alpha subunit.